The sequence spans 259 residues: Glutamate racemase (259 aa).

Residues aspartate 12–serine 13 and tyrosine 44–glycine 45 contribute to the substrate site. The active-site Proton donor/acceptor is the cysteine 75. Asparagine 76–threonine 77 is a binding site for substrate. The Proton donor/acceptor role is filled by cysteine 186. Position 187–188 (threonine 187–histidine 188) interacts with substrate.

This sequence belongs to the aspartate/glutamate racemases family.

It catalyses the reaction L-glutamate = D-glutamate. It participates in cell wall biogenesis; peptidoglycan biosynthesis. Functionally, provides the (R)-glutamate required for cell wall biosynthesis. The chain is Glutamate racemase from Clostridium novyi (strain NT).